A 904-amino-acid polypeptide reads, in one-letter code: Transcription factor E2F7 (904 aa).

Positions 61–80 (TPDRNPITPVKPVDRQPQVE) are disordered. At S96 the chain carries Phosphoserine. A DNA-binding region spans residues 143–212 (RKQKSLGLLC…VAKNQYGWHG (70 aa)). Over residues 252–269 (GERRKDGSPDPRDPHLLD) the composition is skewed to basic and acidic residues. Residues 252 to 283 (GERRKDGSPDPRDPHLLDFSEADYPSSSANSR) form a disordered region. A DNA-binding region spans residues 283 to 368 (RKDKSLRIMS…GRKPAFKWIG (86 aa)). Phosphoserine is present on S411. The segment at 560–628 (LSPESRSEED…VMPKKPSSST (69 aa)) is disordered. Phosphoserine is present on S833. The disordered stretch occupies residues 846 to 904 (AEQSPAPATPKSIQRRHRETFFKTPGSLGDPVFRRKERNQSRNTSSAQRRLEISSSGPD). Residues 886-904 (SRNTSSAQRRLEISSSGPD) are compositionally biased toward polar residues.

This sequence belongs to the E2F/DP family. As to quaternary structure, interacts with HIF1A. Homodimer and heterodimer: mainly forms homodimers and, to a lesser extent, heterodimers with E2F8. Dimerization is important for DNA-binding. Interacts with MN1. In terms of tissue distribution, widely expressed with highest levels in skin and thymus and very low levels in brain, muscle and stomach. Expressed in trophoblast giant cells throughout placenta development (at protein level).

The protein resides in the nucleus. Functionally, atypical E2F transcription factor that participates in various processes such as angiogenesis, polyploidization of specialized cells and DNA damage response. Mainly acts as a transcription repressor that binds DNA independently of DP proteins and specifically recognizes the E2 recognition site 5'-TTTC[CG]CGC-3'. Directly represses transcription of classical E2F transcription factors such as E2F1. Acts as a regulator of S-phase by recognizing and binding the E2-related site 5'-TTCCCGCC-3' and mediating repression of G1/S-regulated genes. Plays a key role in polyploidization of cells in placenta and liver by regulating the endocycle, probably by repressing genes promoting cytokinesis and antagonizing action of classical E2F proteins (E2F1, E2F2 and/or E2F3). Required for placental development by promoting polyploidization of trophoblast giant cells. Also involved in DNA damage response: up-regulated by p53/TP53 following genotoxic stress and acts as a downstream effector of p53/TP53-dependent repression by mediating repression of indirect p53/TP53 target genes involved in DNA replication. Acts as a promoter of sprouting angiogenesis, possibly by acting as a transcription activator: associates with HIF1A, recognizes and binds the VEGFA promoter, which is different from canonical E2 recognition site, and activates expression of the VEGFA gene. Acts as a negative regulator of keratinocyte differentiation. The chain is Transcription factor E2F7 (E2f7) from Mus musculus (Mouse).